Consider the following 1091-residue polypeptide: Ninein homolog (1091 aa).

A sufficient for binding to microtubules region spans residues 1–361 (MEVSADPYEQ…AVEVDERHAS (361 aa)). Disordered regions lie at residues 100–216 (YIES…TTSP), 456–483 (AQTS…KEEE), 525–602 (KAKK…EELT), and 616–639 (KAAK…SLEQ). 5 positions are modified to phosphoserine: Ser103, Ser107, Ser108, Ser113, and Ser141. Thr144 carries the phosphothreonine modification. A compositionally biased stretch (polar residues) spans 168-177 (VQRSSSQSDL). A sufficient for interaction with ens region spans residues 487-526 (LMEKLAALQMENAQLRDKTDELTIEIESLNVELIRSKTKA). Composition is skewed to basic and acidic residues over residues 527-537 (KKQEKQEKQED) and 547-563 (RRGD…ESPR). Ser594 bears the Phosphoserine mark. The span at 616–634 (KAAKEGRSLTPESRSKELE) shows a compositional bias: basic and acidic residues. Residues Ser701 and Ser714 each carry the phosphoserine modification. A disordered region spans residues 799–919 (AKSLADSKDE…TSCLSHEKCS (121 aa)). The segment covering 822–845 (SHKTASRNNLTTSETSIFSTTPFE) has biased composition (polar residues). A compositionally biased stretch (low complexity) spans 846-860 (SSQSGPSPTNSGNSN). Polar residues predominate over residues 894-913 (ETSSTASGKSFESNSKTSCL).

Interacts with ens.

The protein resides in the cytoplasm. The protein localises to the cytoskeleton. Its subcellular location is the microtubule organizing center. It localises to the centrosome. It is found in the perinuclear region. Required for the positioning and anchorage of the microtubule minus-ends in various cells. In fat body cells, part of perinuclear non-centrosomal microtubule-organizing centers (ncMTOCs) which function to accommodate the organization of microtubule (MT) networks to control nuclear positioning and dynein motor-based retrograde endosomal trafficking. Within the ncMTOCs, Msp300 and shot anchors the ncMTOC at the nuclear surface and recruits the MT minus-end regulators Patronin and Nin for assembly, anchoring and/or stabilization of circumferential and radial MTs at the ncMTOC. This protein may also function with Patronin to recruit msps to the ncMTOC for the gamma-tubulin-independent elongation of radial MTs. In embryonic myotubes and larval myofibers, functions with ens to regulate myonuclear positioning and, as a consequence, is involved in muscle development. Likely functions by positively regulating ens. Essential for embryogenesis, likely by contributing to accurate chromosome segregation during early embryonic nuclear divisions. However, other reports found that it is not essential for embryogenesis or embryonic cellular divisions. The polypeptide is Ninein homolog (Drosophila melanogaster (Fruit fly)).